The sequence spans 545 residues: Membrane protein insertase YidC (545 aa).

Helical transmembrane passes span 350–370, 424–444, 461–481, and 498–518; these read IIGN…AVLY, LPML…FASV, ADPY…QTYL, and PLVF…YWVV.

Belongs to the OXA1/ALB3/YidC family. Type 1 subfamily. As to quaternary structure, interacts with the Sec translocase complex via SecD. Specifically interacts with transmembrane segments of nascent integral membrane proteins during membrane integration.

The protein localises to the cell inner membrane. In terms of biological role, required for the insertion and/or proper folding and/or complex formation of integral membrane proteins into the membrane. Involved in integration of membrane proteins that insert both dependently and independently of the Sec translocase complex, as well as at least some lipoproteins. Aids folding of multispanning membrane proteins. This is Membrane protein insertase YidC from Neisseria meningitidis serogroup C (strain 053442).